A 283-amino-acid polypeptide reads, in one-letter code: Bifunctional protein FolD (283 aa).

Residues 159-161 (GRS), Ser184, and Ile225 contribute to the NADP(+) site.

It belongs to the tetrahydrofolate dehydrogenase/cyclohydrolase family. As to quaternary structure, homodimer.

The catalysed reaction is (6R)-5,10-methylene-5,6,7,8-tetrahydrofolate + NADP(+) = (6R)-5,10-methenyltetrahydrofolate + NADPH. It catalyses the reaction (6R)-5,10-methenyltetrahydrofolate + H2O = (6R)-10-formyltetrahydrofolate + H(+). The protein operates within one-carbon metabolism; tetrahydrofolate interconversion. In terms of biological role, catalyzes the oxidation of 5,10-methylenetetrahydrofolate to 5,10-methenyltetrahydrofolate and then the hydrolysis of 5,10-methenyltetrahydrofolate to 10-formyltetrahydrofolate. The chain is Bifunctional protein FolD from Methanoculleus marisnigri (strain ATCC 35101 / DSM 1498 / JR1).